Here is a 116-residue protein sequence, read N- to C-terminus: S-adenosylmethionine decarboxylase proenzyme (116 aa).

The Schiff-base intermediate with substrate; via pyruvic acid role is filled by Ser63. Pyruvic acid (Ser); by autocatalysis is present on Ser63. His68 acts as the Proton acceptor; for processing activity in catalysis. The active-site Proton donor; for catalytic activity is Cys83.

This sequence belongs to the prokaryotic AdoMetDC family. Type 1 subfamily. As to quaternary structure, heterotetramer of two alpha and two beta chains arranged as a dimer of alpha/beta heterodimers. It depends on pyruvate as a cofactor. In terms of processing, is synthesized initially as an inactive proenzyme. Formation of the active enzyme involves a self-maturation process in which the active site pyruvoyl group is generated from an internal serine residue via an autocatalytic post-translational modification. Two non-identical subunits are generated from the proenzyme in this reaction, and the pyruvate is formed at the N-terminus of the alpha chain, which is derived from the carboxyl end of the proenzyme. The post-translation cleavage follows an unusual pathway, termed non-hydrolytic serinolysis, in which the side chain hydroxyl group of the serine supplies its oxygen atom to form the C-terminus of the beta chain, while the remainder of the serine residue undergoes an oxidative deamination to produce ammonia and the pyruvoyl group blocking the N-terminus of the alpha chain.

The enzyme catalyses S-adenosyl-L-methionine + H(+) = S-adenosyl 3-(methylsulfanyl)propylamine + CO2. The protein operates within amine and polyamine biosynthesis; S-adenosylmethioninamine biosynthesis; S-adenosylmethioninamine from S-adenosyl-L-methionine: step 1/1. Functionally, catalyzes the decarboxylation of S-adenosylmethionine to S-adenosylmethioninamine (dcAdoMet), the propylamine donor required for the synthesis of the polyamines spermine and spermidine from the diamine putrescine. The sequence is that of S-adenosylmethionine decarboxylase proenzyme from Clostridium botulinum (strain ATCC 19397 / Type A).